Here is a 453-residue protein sequence, read N- to C-terminus: Trigger factor (453 aa).

Residues 171-256 (GDRVTINFKG…ATSIEAPQDI (86 aa)) enclose the PPIase FKBP-type domain.

This sequence belongs to the FKBP-type PPIase family. Tig subfamily.

It is found in the cytoplasm. It catalyses the reaction [protein]-peptidylproline (omega=180) = [protein]-peptidylproline (omega=0). Its function is as follows. Involved in protein export. Acts as a chaperone by maintaining the newly synthesized protein in an open conformation. Functions as a peptidyl-prolyl cis-trans isomerase. This chain is Trigger factor, found in Bradyrhizobium diazoefficiens (strain JCM 10833 / BCRC 13528 / IAM 13628 / NBRC 14792 / USDA 110).